A 510-amino-acid chain; its full sequence is GMP synthase [glutamine-hydrolyzing] (510 aa).

Residues 5–194 (DILVLDFGSQ…FAKICGCEST (190 aa)) form the Glutamine amidotransferase type-1 domain. The Nucleophile role is filled by C82. Active-site residues include H169 and E171. A GMPS ATP-PPase domain is found at 195 to 385 (WNMGSFAKKE…LGLSRDIVYR (191 aa)). 222 to 228 (SGGVDSS) is an ATP binding site.

In terms of assembly, homodimer.

It catalyses the reaction XMP + L-glutamine + ATP + H2O = GMP + L-glutamate + AMP + diphosphate + 2 H(+). Its pathway is purine metabolism; GMP biosynthesis; GMP from XMP (L-Gln route): step 1/1. In terms of biological role, catalyzes the synthesis of GMP from XMP. The chain is GMP synthase [glutamine-hydrolyzing] from Campylobacter fetus subsp. fetus (strain 82-40).